Reading from the N-terminus, the 62-residue chain is Small ribosomal subunit protein eS27 (62 aa).

C17, C20, C36, and C39 together coordinate Zn(2+). The C4-type zinc finger occupies C17–C39.

Belongs to the eukaryotic ribosomal protein eS27 family. In terms of assembly, part of the 30S ribosomal subunit. It depends on Zn(2+) as a cofactor.

In Methanocorpusculum labreanum (strain ATCC 43576 / DSM 4855 / Z), this protein is Small ribosomal subunit protein eS27.